The chain runs to 254 residues: Adenosine 5'-phosphosulfate reductase (254 aa).

Cysteine 140, cysteine 141, cysteine 223, and cysteine 226 together coordinate [4Fe-4S] cluster. The active-site Nucleophile; cysteine thiosulfonate intermediate is cysteine 249.

The protein belongs to the PAPS reductase family. CysH subfamily. The cofactor is [4Fe-4S] cluster.

It localises to the cytoplasm. It carries out the reaction [thioredoxin]-disulfide + sulfite + AMP + 2 H(+) = adenosine 5'-phosphosulfate + [thioredoxin]-dithiol. It participates in sulfur metabolism; hydrogen sulfide biosynthesis; sulfite from sulfate. Functionally, catalyzes the formation of sulfite from adenosine 5'-phosphosulfate (APS) using thioredoxin as an electron donor. The polypeptide is Adenosine 5'-phosphosulfate reductase (Mycobacterium bovis (strain ATCC BAA-935 / AF2122/97)).